We begin with the raw amino-acid sequence, 209 residues long: PRA1 family protein A2 (209 aa).

A run of 4 helical transmembrane segments spans residues 51–72 (LYYY…ALVT), 76–98 (ALVG…AASF), 142–162 (RWVF…SSCG), and 163–183 (LLWV…HASI).

It belongs to the PRA1 family.

The protein localises to the endosome membrane. In terms of biological role, may be involved in both secretory and endocytic intracellular trafficking in the endosomal/prevacuolar compartments. In Arabidopsis thaliana (Mouse-ear cress), this protein is PRA1 family protein A2 (PRA1A2).